Reading from the N-terminus, the 246-residue chain is Small ribosomal subunit protein uS3 (246 aa).

Residues 38 to 106 enclose the KH type-2 domain; the sequence is IRQYLNARLA…DVQINIYEIR (69 aa). The segment at 218 to 246 is disordered; that stretch reads VAKNQSRRPNAQGGNNRGGDRNRRRKGNR.

It belongs to the universal ribosomal protein uS3 family. Part of the 30S ribosomal subunit. Forms a tight complex with proteins S10 and S14.

In terms of biological role, binds the lower part of the 30S subunit head. Binds mRNA in the 70S ribosome, positioning it for translation. This Porphyromonas gingivalis (strain ATCC 33277 / DSM 20709 / CIP 103683 / JCM 12257 / NCTC 11834 / 2561) protein is Small ribosomal subunit protein uS3.